The chain runs to 415 residues: MDYKVKDLSLAEQGKKQIEWAEIHMPALMEIRKQFEKEKPLQGLRISAVLHVTKETAVLVKTLKIGGATVALAGSNPLSTQDDVAAALVEEGIRVFAWRGETEKDYYDNIKEILKYEPQIIMDDGGDLHAYVHENMPQLKLFGGTEETTTGVIRLKAMEEQGVLRYPVIAVNNAFTKYLFDNRIGTGQSTIDGILRATNILIAGKVAVVAGYGWVGRGIAQRLRGMGARVIVVEVSPLRALEAVMDGFDVMPMSKAAELGEIFITATGNINVIRKEHILKMKDGAILANSGHFNVEIDVKGLKEMAKSSRLIRPNLEEYELPNGKRIYLLAEGRLVNLAAAEGHPSEVMDLSFSNQALSVKYIYENRGKLENKVYNVPQEIDETVAKLKLNGMGIEIEPMTQEQIEYMKQWRYGT.

Substrate contacts are provided by Thr53, Asp124, and Glu147. 148–150 (TTT) is a binding site for NAD(+). 2 residues coordinate substrate: Lys177 and Asp181. Residues Asn182, 211–216 (GYGWVG), Glu234, Asn269, 290–292 (SGH), and Asn337 contribute to the NAD(+) site.

This sequence belongs to the adenosylhomocysteinase family. NAD(+) serves as cofactor.

The protein localises to the cytoplasm. The enzyme catalyses S-adenosyl-L-homocysteine + H2O = L-homocysteine + adenosine. The protein operates within amino-acid biosynthesis; L-homocysteine biosynthesis; L-homocysteine from S-adenosyl-L-homocysteine: step 1/1. In terms of biological role, may play a key role in the regulation of the intracellular concentration of adenosylhomocysteine. The sequence is that of Adenosylhomocysteinase from Sulfurisphaera tokodaii (strain DSM 16993 / JCM 10545 / NBRC 100140 / 7) (Sulfolobus tokodaii).